The following is a 541-amino-acid chain: Pseudokinase FAM20A (541 aa).

Positions 1-33 are cleaved as a signal peptide; that stretch reads MPGLRRDRLLTLLLLGALLSADLYFHLWPQVQR. Residues 38-90 are disordered; sequence RERPRGCPCTGRASSLARDSAAAASDPGTIVHNFSRTEPRTEPAGGSHSGSSS. Over residues 49–63 the composition is skewed to low complexity; it reads RASSLARDSAAAASD. N-linked (GlcNAc...) asparagine glycosylation is found at Asn-70, Asn-145, and Asn-287. 4 disulfides stabilise this stretch: Cys-314-Cys-330, Cys-319-Cys-323, Cys-378-Cys-452, and Cys-453-Cys-512. The N-linked (GlcNAc...) asparagine glycan is linked to Asn-388. Asn-538 carries an N-linked (GlcNAc...) asparagine glycan.

This sequence belongs to the FAM20 family. As to quaternary structure, interacts with FAM20C; probably forming a heterotetramer of 2 subunits of FAM20A and 2 subunits of FAM20C. N-glycosylated. As to expression, highly expressed in lung and liver. Intermediate levels in thymus and ovary.

The protein localises to the secreted. The protein resides in the golgi apparatus. Its subcellular location is the endoplasmic reticulum. Functionally, pseudokinase that acts as an allosteric activator of the Golgi serine/threonine protein kinase FAM20C and is involved in biomineralization of teeth. Forms a complex with FAM20C and increases the ability of FAM20C to phosphorylate the proteins that form the 'matrix' that guides the deposition of the enamel minerals. In Homo sapiens (Human), this protein is Pseudokinase FAM20A.